The primary structure comprises 199 residues: Chromophore lyase CpcT/CpeT (199 aa).

It belongs to the CpcT/CpeT biliprotein lyase family.

Covalently attaches a chromophore to Cys residue(s) of phycobiliproteins. This chain is Chromophore lyase CpcT/CpeT, found in Prochlorococcus marinus (strain NATL1A).